A 252-amino-acid polypeptide reads, in one-letter code: Phosphomannomutase (252 aa).

Aspartate 13 serves as the catalytic Nucleophile. Mg(2+)-binding residues include aspartate 13 and aspartate 15. Residue aspartate 15 is the Proton donor/acceptor of the active site. Alpha-D-mannose 1-phosphate contacts are provided by arginine 22, arginine 124, arginine 135, arginine 142, serine 180, and aspartate 182. Mg(2+) is bound by residues aspartate 208, tyrosine 220, and threonine 225.

It belongs to the eukaryotic PMM family. As to quaternary structure, homodimer. It depends on Mg(2+) as a cofactor.

The protein localises to the cytoplasm. It catalyses the reaction alpha-D-mannose 1-phosphate = D-mannose 6-phosphate. Its pathway is nucleotide-sugar biosynthesis; GDP-alpha-D-mannose biosynthesis; alpha-D-mannose 1-phosphate from D-fructose 6-phosphate: step 2/2. Catalyzes the interconversion of mannose-6-phosphate to mannose-1-phosphate, the precursor for the synthesis of GDP-mannose. GDP-mannose is an essential sugar nucleotide for the synthesis of D-mannose-containing cell wall polysaccharides (galactomannans and glucomannans), glycolipids, glycoproteins and the antioxidant L-ascorbate. Can complement the yeast temperature-sensitive mutant sec53-6. In Solanum lycopersicum (Tomato), this protein is Phosphomannomutase.